Here is a 428-residue protein sequence, read N- to C-terminus: Glucose-1-phosphate adenylyltransferase (428 aa).

Alpha-D-glucose 1-phosphate contacts are provided by residues Y99, G164, 179-180, and S190; that span reads EK.

It belongs to the bacterial/plant glucose-1-phosphate adenylyltransferase family. In terms of assembly, homotetramer.

The catalysed reaction is alpha-D-glucose 1-phosphate + ATP + H(+) = ADP-alpha-D-glucose + diphosphate. It functions in the pathway glycan biosynthesis; glycogen biosynthesis. Functionally, involved in the biosynthesis of ADP-glucose, a building block required for the elongation reactions to produce glycogen. Catalyzes the reaction between ATP and alpha-D-glucose 1-phosphate (G1P) to produce pyrophosphate and ADP-Glc. The chain is Glucose-1-phosphate adenylyltransferase from Thermomicrobium roseum (strain ATCC 27502 / DSM 5159 / P-2).